The following is a 119-amino-acid chain: Phytosulfokines 2 (119 aa).

The first 34 residues, 1–34 (MSTTRGVSSSSAAAALALLLLFALCFFSFHSAAA), serve as a signal peptide directing secretion. A propeptide spanning residues 35-109 (ARAVPRDEHQ…RRLLSDAHLD (75 aa)) is cleaved from the precursor. Tyr-110 and Tyr-112 each carry sulfotyrosine. Residues 115 to 119 (HKNKP) constitute a propeptide that is removed on maturation.

This sequence belongs to the phytosulfokine family. Sulfation is important for activity and for the binding to a putative membrane receptor. In terms of processing, PSK-alpha is produced by endopeptidase digestion. PSK-beta is produced from PSK-alpha by exopeptidase digestion.

The protein localises to the secreted. In terms of biological role, promotes plant cell differentiation, organogenesis and somatic embryogenesis as well as cell proliferation. The sequence is that of Phytosulfokines 2 (PSK2) from Oryza sativa subsp. indica (Rice).